The following is a 268-amino-acid chain: Tryptophan synthase alpha chain (268 aa).

Residues E49 and D60 each act as proton acceptor in the active site.

Belongs to the TrpA family. In terms of assembly, tetramer of two alpha and two beta chains.

It carries out the reaction (1S,2R)-1-C-(indol-3-yl)glycerol 3-phosphate + L-serine = D-glyceraldehyde 3-phosphate + L-tryptophan + H2O. Its pathway is amino-acid biosynthesis; L-tryptophan biosynthesis; L-tryptophan from chorismate: step 5/5. Its function is as follows. The alpha subunit is responsible for the aldol cleavage of indoleglycerol phosphate to indole and glyceraldehyde 3-phosphate. This chain is Tryptophan synthase alpha chain, found in Salmonella typhimurium (strain LT2 / SGSC1412 / ATCC 700720).